The following is a 234-amino-acid chain: 2-hydroxy-3-keto-5-methylthiopentenyl-1-phosphate phosphatase (234 aa).

The protein belongs to the HAD-like hydrolase superfamily. MtnX family.

It catalyses the reaction 2-hydroxy-5-methylsulfanyl-3-oxopent-1-enyl phosphate + H2O = 1,2-dihydroxy-5-(methylsulfanyl)pent-1-en-3-one + phosphate. It participates in amino-acid biosynthesis; L-methionine biosynthesis via salvage pathway; L-methionine from S-methyl-5-thio-alpha-D-ribose 1-phosphate: step 4/6. Dephosphorylates 2-hydroxy-3-keto-5-methylthiopentenyl-1-phosphate (HK-MTPenyl-1-P) yielding 1,2-dihydroxy-3-keto-5-methylthiopentene (DHK-MTPene). This chain is 2-hydroxy-3-keto-5-methylthiopentenyl-1-phosphate phosphatase, found in Bacillus velezensis (strain DSM 23117 / BGSC 10A6 / LMG 26770 / FZB42) (Bacillus amyloliquefaciens subsp. plantarum).